Consider the following 336-residue polypeptide: Pentalenene synthase (336 aa).

Residues Asp80, Asp84, Asn219, Ser223, and Glu227 each contribute to the Mg(2+) site. The DDXXD motif signature appears at 80–84; that stretch reads DDLFD.

This sequence belongs to the terpene synthase family. Monomer. Mg(2+) serves as cofactor.

It carries out the reaction (2E,6E)-farnesyl diphosphate = pentalenene + diphosphate. It functions in the pathway antibiotic biosynthesis; neopentalenolactone biosynthesis. Its function is as follows. Catalyzes the cyclization of farnesyl diphosphate (FPP) to the tricyclic sesquiterpene pentalenene in the biosynthesis of neopentalenolactone antibiotic. The protein is Pentalenene synthase (ptlA) of Streptomyces avermitilis (strain ATCC 31267 / DSM 46492 / JCM 5070 / NBRC 14893 / NCIMB 12804 / NRRL 8165 / MA-4680).